Consider the following 338-residue polypeptide: Dihydroorotate dehydrogenase (quinone) (338 aa).

Residues 59 to 63 (AGLDK) and T83 contribute to the FMN site. K63 is a binding site for substrate. 108–112 (NRMGF) contributes to the substrate binding site. The FMN site is built by N136 and N169. Substrate is bound at residue N169. S172 (nucleophile) is an active-site residue. A substrate-binding site is contributed by N174. K214 and T242 together coordinate FMN. 243-244 (NT) is a substrate binding site. Residues G265, G294, and 315-316 (YS) contribute to the FMN site.

The protein belongs to the dihydroorotate dehydrogenase family. Type 2 subfamily. Monomer. It depends on FMN as a cofactor.

The protein resides in the cell membrane. The catalysed reaction is (S)-dihydroorotate + a quinone = orotate + a quinol. It participates in pyrimidine metabolism; UMP biosynthesis via de novo pathway; orotate from (S)-dihydroorotate (quinone route): step 1/1. Catalyzes the conversion of dihydroorotate to orotate with quinone as electron acceptor. This is Dihydroorotate dehydrogenase (quinone) from Azoarcus sp. (strain BH72).